A 387-amino-acid chain; its full sequence is 1-deoxy-D-xylulose 5-phosphate reductoisomerase (387 aa).

8 residues coordinate NADPH: T11, G12, S13, I14, G37, R38, Q39, and N127. K128 is a binding site for 1-deoxy-D-xylulose 5-phosphate. Residue E129 participates in NADPH binding. D153 serves as a coordination point for Mn(2+). Residues S154, E155, S179, and H200 each contribute to the 1-deoxy-D-xylulose 5-phosphate site. E155 is a binding site for Mn(2+). Residue G206 participates in NADPH binding. 1-deoxy-D-xylulose 5-phosphate-binding residues include S213, N218, K219, and E222. E222 contributes to the Mn(2+) binding site.

It belongs to the DXR family. Requires Mg(2+) as cofactor. Mn(2+) is required as a cofactor.

It catalyses the reaction 2-C-methyl-D-erythritol 4-phosphate + NADP(+) = 1-deoxy-D-xylulose 5-phosphate + NADPH + H(+). It participates in isoprenoid biosynthesis; isopentenyl diphosphate biosynthesis via DXP pathway; isopentenyl diphosphate from 1-deoxy-D-xylulose 5-phosphate: step 1/6. Functionally, catalyzes the NADPH-dependent rearrangement and reduction of 1-deoxy-D-xylulose-5-phosphate (DXP) to 2-C-methyl-D-erythritol 4-phosphate (MEP). The protein is 1-deoxy-D-xylulose 5-phosphate reductoisomerase of Symbiobacterium thermophilum (strain DSM 24528 / JCM 14929 / IAM 14863 / T).